The chain runs to 355 residues: Ubiquinone biosynthesis protein COQ4 homolog, mitochondrial (355 aa).

Zn(2+) is bound by residues His134, Asp135, His138, and Glu150.

Belongs to the COQ4 family. In terms of assembly, component of a multi-subunit COQ enzyme complex. Requires Zn(2+) as cofactor.

The protein localises to the mitochondrion inner membrane. The catalysed reaction is a 4-hydroxy-3-methoxy-5-(all-trans-polyprenyl)benzoate + H(+) = a 2-methoxy-6-(all-trans-polyprenyl)phenol + CO2. The protein operates within cofactor biosynthesis; ubiquinone biosynthesis. Its function is as follows. Lyase that catalyzes the C1-decarboxylation of 4-hydroxy-3-methoxy-5-(all-trans-polyprenyl)benzoic acid into 2-methoxy-6-(all-trans-polyprenyl)phenol during ubiquinone biosynthesis. This Plasmodium chabaudi chabaudi protein is Ubiquinone biosynthesis protein COQ4 homolog, mitochondrial.